Reading from the N-terminus, the 295-residue chain is Cytidine deaminase (295 aa).

CMP/dCMP-type deaminase domains lie at 48-168 (EDSD…FGPA) and 187-295 (DDDE…YLSL). 89–91 (NME) is a substrate binding site. Histidine 102 serves as a coordination point for Zn(2+). Glutamate 104 (proton donor) is an active-site residue. Residues cysteine 129 and cysteine 132 each contribute to the Zn(2+) site.

This sequence belongs to the cytidine and deoxycytidylate deaminase family. Homodimer. Requires Zn(2+) as cofactor.

It catalyses the reaction cytidine + H2O + H(+) = uridine + NH4(+). The catalysed reaction is 2'-deoxycytidine + H2O + H(+) = 2'-deoxyuridine + NH4(+). Functionally, this enzyme scavenges exogenous and endogenous cytidine and 2'-deoxycytidine for UMP synthesis. In Vibrio cholerae serotype O1 (strain ATCC 39541 / Classical Ogawa 395 / O395), this protein is Cytidine deaminase.